The primary structure comprises 94 residues: ATP synthase F(0) complex subunit f, mitochondrial (94 aa).

Ala2 bears the N-acetylalanine mark. Ser3 carries the post-translational modification Phosphoserine. An N6-acetyllysine modification is found at Lys22. The chain crosses the membrane as a helical span at residues 68-85 (MVLACYVLFSYSFSYKHL).

It belongs to the ATPase F chain family. Component of the ATP synthase complex composed at least of ATP5F1A/subunit alpha, ATP5F1B/subunit beta, ATP5MC1/subunit c (homooctomer), MT-ATP6/subunit a, MT-ATP8/subunit 8, ATP5ME/subunit e, ATP5MF/subunit f, ATP5MG/subunit g, ATP5MK/subunit k, ATP5MJ/subunit j, ATP5F1C/subunit gamma, ATP5F1D/subunit delta, ATP5F1E/subunit epsilon, ATP5PF/subunit F6, ATP5PB/subunit b, ATP5PD/subunit d, ATP5PO/subunit OSCP. ATP synthase complex consists of a soluble F(1) head domain (subunits alpha(3) and beta(3)) - the catalytic core - and a membrane F(0) domain - the membrane proton channel (subunits c, a, 8, e, f, g, k and j). These two domains are linked by a central stalk (subunits gamma, delta, and epsilon) rotating inside the F1 region and a stationary peripheral stalk (subunits F6, b, d, and OSCP).

The protein localises to the mitochondrion. It localises to the mitochondrion inner membrane. Subunit f, of the mitochondrial membrane ATP synthase complex (F(1)F(0) ATP synthase or Complex V) that produces ATP from ADP in the presence of a proton gradient across the membrane which is generated by electron transport complexes of the respiratory chain. ATP synthase complex consist of a soluble F(1) head domain - the catalytic core - and a membrane F(1) domain - the membrane proton channel. These two domains are linked by a central stalk rotating inside the F(1) region and a stationary peripheral stalk. During catalysis, ATP synthesis in the catalytic domain of F(1) is coupled via a rotary mechanism of the central stalk subunits to proton translocation. In vivo, can only synthesize ATP although its ATP hydrolase activity can be activated artificially in vitro. Part of the complex F(0) domain. The chain is ATP synthase F(0) complex subunit f, mitochondrial from Pongo abelii (Sumatran orangutan).